Reading from the N-terminus, the 332-residue chain is GTP 3',8-cyclase (332 aa).

The region spanning 9-234 (TFGRRISYLR…DSDHRTGGPS (226 aa)) is the Radical SAM core domain. Arg-18 is a binding site for GTP. Positions 25 and 29 each coordinate [4Fe-4S] cluster. Tyr-31 provides a ligand contact to S-adenosyl-L-methionine. Cys-32 contacts [4Fe-4S] cluster. A GTP-binding site is contributed by Arg-67. Gly-71 is a binding site for S-adenosyl-L-methionine. Position 100 (Thr-100) interacts with GTP. Ser-124 contacts S-adenosyl-L-methionine. Lys-160 contributes to the GTP binding site. Residue Met-194 participates in S-adenosyl-L-methionine binding. [4Fe-4S] cluster is bound by residues Cys-257 and Cys-260. 262 to 264 (RVR) is a binding site for GTP. Cys-274 contacts [4Fe-4S] cluster.

This sequence belongs to the radical SAM superfamily. MoaA family. As to quaternary structure, monomer and homodimer. The cofactor is [4Fe-4S] cluster.

It carries out the reaction GTP + AH2 + S-adenosyl-L-methionine = (8S)-3',8-cyclo-7,8-dihydroguanosine 5'-triphosphate + 5'-deoxyadenosine + L-methionine + A + H(+). It participates in cofactor biosynthesis; molybdopterin biosynthesis. Catalyzes the cyclization of GTP to (8S)-3',8-cyclo-7,8-dihydroguanosine 5'-triphosphate. This Erythrobacter litoralis (strain HTCC2594) protein is GTP 3',8-cyclase.